Consider the following 63-residue polypeptide: Overexpressed in colon carcinoma 1 protein homolog (63 aa).

Positions 1-10 are enriched in polar residues; that stretch reads MGCGNSTATS. Positions 1 to 37 are disordered; the sequence is MGCGNSTATSAAAGRGKPGAVKDATEDSITEDDKRRN.

The protein belongs to the OCC1 family.

The sequence is that of Overexpressed in colon carcinoma 1 protein homolog from Rattus norvegicus (Rat).